The primary structure comprises 562 residues: Tissue-type plasminogen activator (562 aa).

The N-terminal stretch at 1 to 20 (MNAMKRGLCCVLLLCGAVFA) is a signal peptide. A propeptide spanning residues 21 to 32 (LPSQEIHARVRR) is cleaved from the precursor. A propeptide spans 33–35 (GAR) (removed by plasmin). Positions 39–81 (VICRDEKTQMIYQQHQSWLRPVLRSNRVEYCWCNSGRAQCHSV) constitute a Fibronectin type-I domain. Intrachain disulfides connect cysteine 41/cysteine 71, cysteine 69/cysteine 78, cysteine 86/cysteine 97, cysteine 91/cysteine 108, cysteine 110/cysteine 119, cysteine 127/cysteine 208, cysteine 148/cysteine 190, cysteine 179/cysteine 203, cysteine 215/cysteine 296, cysteine 236/cysteine 278, cysteine 267/cysteine 291, cysteine 299/cysteine 430, cysteine 342/cysteine 358, cysteine 350/cysteine 419, cysteine 444/cysteine 519, cysteine 476/cysteine 492, and cysteine 509/cysteine 537. Residues 42-52 (RDEKTQMIYQQ) are important for binding to annexin A2. The region spanning 82–120 (PVRSCSEPRCFNGGTCQQALYFSDFVCQCPEGFAGKCCE) is the EGF-like domain. Threonine 96 is a glycosylation site (O-linked (Fuc) threonine). 2 Kringle domains span residues 126–208 (TCYE…TPAC) and 214–296 (DCYF…VPSC). N-linked (GlcNAc...) asparagine glycosylation occurs at asparagine 152. In terms of domain architecture, Peptidase S1 spans 311-561 (IKGGLFADIA…YLDWIHDNMR (251 aa)). Active-site charge relay system residues include histidine 357 and aspartate 406. An N-linked (GlcNAc...) asparagine glycan is attached at asparagine 483. Catalysis depends on serine 513, which acts as the Charge relay system.

It belongs to the peptidase S1 family. Heterodimer of chain A and chain B held by a disulfide bond. Binds to fibrin with high affinity. This interaction leads to an increase in the catalytic efficiency of the enzyme due to an increase in affinity for plasminogen. Similarly, binding to heparin increases the activation of plasminogen. Binds to annexin A2, cytokeratin-8, fibronectin and laminin. Binds to mannose receptor and the low-density lipoprotein receptor-related protein (LRP1); these proteins are involved in TPA clearance. Binds LRP1B; binding is followed by internalization and degradation. Forms heterodimer with SERPINA5. Interacts with SERPINE1. In complex with SERPINE1, interacts with SORL1. The single chain, almost fully active enzyme, can be further processed into a two-chain fully active form by a cleavage after Arg-310 catalyzed by plasmin, tissue kallikrein or factor Xa.

It localises to the secreted. It is found in the extracellular space. The enzyme catalyses Specific cleavage of Arg-|-Val bond in plasminogen to form plasmin.. Its activity is regulated as follows. Inhibited by SERPINA5. Inhibited by SERPINE1. Converts the abundant, but inactive, zymogen plasminogen to plasmin by hydrolyzing a single Arg-Val bond in plasminogen. By controlling plasmin-mediated proteolysis, it plays an important role in tissue remodeling and degradation, in cell migration and many other physiopathological events. During oocyte activation, plays a role in cortical granule reaction in the zona reaction, which contributes to the block to polyspermy. The protein is Tissue-type plasminogen activator (PLAT) of Pongo abelii (Sumatran orangutan).